Here is a 118-residue protein sequence, read N- to C-terminus: UPF0102 protein PC1_0307 (118 aa).

It belongs to the UPF0102 family.

The sequence is that of UPF0102 protein PC1_0307 from Pectobacterium carotovorum subsp. carotovorum (strain PC1).